We begin with the raw amino-acid sequence, 498 residues long: MSTYRIQGATGEWEVVIGLEVHAQVTSNAKLFSGASTEFGAEPNAQVSLVDAAMPGMLPVPNRECIRQAVRTGMAIEAQINTWSRFDRKNYFYADLPQGYQISQLYHPLVGEGQLLIEADEKAGISEDKVIGIERIHVEQDAGKLMHDQHPTMSYVDLNRCGVALMEIVSRPDMRSPAEAGAYVRKLRAILRYVGSCDGNMEEGSMRADVNVSVRRPGEEFGTRTETKNVNSVRFVMQVIEYEANRQVDLIESGGAVEQETRLFDPGTGTTRTMRSKEDAHDYRYFPDPDLLPLELEDSFLDECRASLPELPDAKRQRYENELGLTPYNARELTAEVETFARFETLLAATAKAIGEDEKKVATQVANWALSVAPGVIKSLGDEAHVENATAERQAAILKMQDAGEISGGQAKEIFEIVLKEGGDPATIADEKGLKQVSDTGAIEAAIDEILANNEDKVEQYKCGKDKLFGFFVGQTMKAMQGKANPAVVNQILKDKLG.

It belongs to the GatB/GatE family. GatB subfamily. Heterotrimer of A, B and C subunits.

The enzyme catalyses L-glutamyl-tRNA(Gln) + L-glutamine + ATP + H2O = L-glutaminyl-tRNA(Gln) + L-glutamate + ADP + phosphate + H(+). The catalysed reaction is L-aspartyl-tRNA(Asn) + L-glutamine + ATP + H2O = L-asparaginyl-tRNA(Asn) + L-glutamate + ADP + phosphate + 2 H(+). In terms of biological role, allows the formation of correctly charged Asn-tRNA(Asn) or Gln-tRNA(Gln) through the transamidation of misacylated Asp-tRNA(Asn) or Glu-tRNA(Gln) in organisms which lack either or both of asparaginyl-tRNA or glutaminyl-tRNA synthetases. The reaction takes place in the presence of glutamine and ATP through an activated phospho-Asp-tRNA(Asn) or phospho-Glu-tRNA(Gln). This Erythrobacter litoralis (strain HTCC2594) protein is Aspartyl/glutamyl-tRNA(Asn/Gln) amidotransferase subunit B.